We begin with the raw amino-acid sequence, 490 residues long: Probable cytosol aminopeptidase (490 aa).

Positions 256 and 261 each coordinate Mn(2+). The active site involves Lys268. Mn(2+) is bound by residues Asp280, Asp340, and Glu342. Residue Arg344 is part of the active site.

The protein belongs to the peptidase M17 family. It depends on Mn(2+) as a cofactor.

Its subcellular location is the cytoplasm. It carries out the reaction Release of an N-terminal amino acid, Xaa-|-Yaa-, in which Xaa is preferably Leu, but may be other amino acids including Pro although not Arg or Lys, and Yaa may be Pro. Amino acid amides and methyl esters are also readily hydrolyzed, but rates on arylamides are exceedingly low.. The catalysed reaction is Release of an N-terminal amino acid, preferentially leucine, but not glutamic or aspartic acids.. Presumably involved in the processing and regular turnover of intracellular proteins. Catalyzes the removal of unsubstituted N-terminal amino acids from various peptides. The chain is Probable cytosol aminopeptidase from Prochlorococcus marinus (strain MIT 9313).